A 343-amino-acid chain; its full sequence is Glucokinase (343 aa).

Position 18–23 (18–23 (GDIGGT)) interacts with ATP.

It belongs to the bacterial glucokinase family.

It localises to the cytoplasm. The catalysed reaction is D-glucose + ATP = D-glucose 6-phosphate + ADP + H(+). This Brucella suis biovar 1 (strain 1330) protein is Glucokinase.